We begin with the raw amino-acid sequence, 620 residues long: MALLQIAEPGQSAAPHQHRLAVGIDLGTTNSLVAAVRSGVTATLPDENGQHSLPSIVRYTQEGIEVGYVAAMSSAQDPKNTIVSVKRFMGRSLTDIQSGEQSFPYQFEASENGLPLFVTPQGLVNPVQVSAEILRPLIERAEKTLGGELQGAVITVPAYFDDAQRQGTKDAASLLGVKVLRLLNEPTAAAIAYGLDSKQEGVIAIYDLGGGTFDISILRLNRGVFEVLATGGDSALGGDDFDHLLQAHMLQVWQLTDIDSQLSRQLLIEARRVKEALTYASDTEASLTLADGSVLKQVVTKAQFEGLIAALVKKTIASCRRTLRDAGVTADEVLETVMVGGSTRVPLVREQVEAFFGKAPLTSIDPDRVVAIGAAIQADILVGNKPESELLLLDVIPLSLGIETMGGLVEKVVSRNTTIPVARAQEFTTFKDGQTAMAFHVVQGERELVDDCRSLARFTLKGIPPLAAGAAHIRVTFQVDADGLLSVTAMEKSTGVQSSIQVKPSFGLSDSEIATMLKDSMKHAKEDIGRRMLAEQQVEAARVLESLNAALSKDGDLLTSDERQQIDTVMAELVQVAGSDDADTIKKAIEILDEHTQDFAAKRMDNSIRVAFKGQSIDKI.

It belongs to the heat shock protein 70 family.

Its function is as follows. Chaperone involved in the maturation of iron-sulfur cluster-containing proteins. Has a low intrinsic ATPase activity which is markedly stimulated by HscB. In Shewanella oneidensis (strain ATCC 700550 / JCM 31522 / CIP 106686 / LMG 19005 / NCIMB 14063 / MR-1), this protein is Chaperone protein HscA homolog.